The chain runs to 216 residues: Adenylate kinase (216 aa).

Position 10-15 (10-15 (GAGKGT)) interacts with ATP. The NMP stretch occupies residues 30–59 (STGDMLREAVKADTPLGIEAKKVMDVGGLI). AMP contacts are provided by residues T31, R36, 57–59 (GLI), 85–88 (GFPR), and Q92. The segment at 122-159 (GRRAHLTSGRTYHIVYNPPKVEGIDDITGEELIQRTDD) is LID. Residues R123 and 132-133 (TY) each bind ATP. AMP is bound by residues R156 and R167. Position 202 (G202) interacts with ATP.

Belongs to the adenylate kinase family. Monomer.

Its subcellular location is the cytoplasm. The enzyme catalyses AMP + ATP = 2 ADP. It functions in the pathway purine metabolism; AMP biosynthesis via salvage pathway; AMP from ADP: step 1/1. Functionally, catalyzes the reversible transfer of the terminal phosphate group between ATP and AMP. Plays an important role in cellular energy homeostasis and in adenine nucleotide metabolism. The sequence is that of Adenylate kinase from Ruthia magnifica subsp. Calyptogena magnifica.